A 187-amino-acid chain; its full sequence is Intraflagellar transport protein 22 homolog (187 aa).

Residues 10-17 (GPSECGKT), 65-69 (DCAGD), and 125-128 (HKPG) each bind GTP.

The protein belongs to the small GTPase superfamily. Rab family.

This is Intraflagellar transport protein 22 homolog (ift22) from Danio rerio (Zebrafish).